Here is a 694-residue protein sequence, read N- to C-terminus: Elongation factor G 2 (694 aa).

Positions 5 to 280 (SKYRNIGIFA…AVVDYLPSPT (276 aa)) constitute a tr-type G domain. Residues 14 to 21 (AHVDAGKT), 78 to 82 (DTPGH), and 132 to 135 (NKLD) contribute to the GTP site.

The protein belongs to the TRAFAC class translation factor GTPase superfamily. Classic translation factor GTPase family. EF-G/EF-2 subfamily.

The protein resides in the cytoplasm. Catalyzes the GTP-dependent ribosomal translocation step during translation elongation. During this step, the ribosome changes from the pre-translocational (PRE) to the post-translocational (POST) state as the newly formed A-site-bound peptidyl-tRNA and P-site-bound deacylated tRNA move to the P and E sites, respectively. Catalyzes the coordinated movement of the two tRNA molecules, the mRNA and conformational changes in the ribosome. In Pseudoalteromonas translucida (strain TAC 125), this protein is Elongation factor G 2.